A 404-amino-acid polypeptide reads, in one-letter code: Glucose-1-phosphate adenylyltransferase (404 aa).

Alpha-D-glucose 1-phosphate contacts are provided by residues Tyr-99, Gly-164, 179 to 180 (EK), and Ser-197.

It belongs to the bacterial/plant glucose-1-phosphate adenylyltransferase family. As to quaternary structure, homotetramer.

It catalyses the reaction alpha-D-glucose 1-phosphate + ATP + H(+) = ADP-alpha-D-glucose + diphosphate. The protein operates within glycan biosynthesis; glycogen biosynthesis. Involved in the biosynthesis of ADP-glucose, a building block required for the elongation reactions to produce glycogen. Catalyzes the reaction between ATP and alpha-D-glucose 1-phosphate (G1P) to produce pyrophosphate and ADP-Glc. The sequence is that of Glucose-1-phosphate adenylyltransferase from Rhodococcus opacus (strain B4).